We begin with the raw amino-acid sequence, 279 residues long: Acyl-[acyl-carrier-protein]--UDP-N-acetylglucosamine O-acyltransferase (279 aa).

Residues 256-279 (IERGADKDALQDESVEKEGALVES) form a disordered region.

It belongs to the transferase hexapeptide repeat family. LpxA subfamily. As to quaternary structure, homotrimer.

It is found in the cytoplasm. The enzyme catalyses a (3R)-hydroxyacyl-[ACP] + UDP-N-acetyl-alpha-D-glucosamine = a UDP-3-O-[(3R)-3-hydroxyacyl]-N-acetyl-alpha-D-glucosamine + holo-[ACP]. It participates in glycolipid biosynthesis; lipid IV(A) biosynthesis; lipid IV(A) from (3R)-3-hydroxytetradecanoyl-[acyl-carrier-protein] and UDP-N-acetyl-alpha-D-glucosamine: step 1/6. Its function is as follows. Involved in the biosynthesis of lipid A, a phosphorylated glycolipid that anchors the lipopolysaccharide to the outer membrane of the cell. This Chlamydia caviae (strain ATCC VR-813 / DSM 19441 / 03DC25 / GPIC) (Chlamydophila caviae) protein is Acyl-[acyl-carrier-protein]--UDP-N-acetylglucosamine O-acyltransferase.